We begin with the raw amino-acid sequence, 280 residues long: Succinate dehydrogenase [ubiquinone] iron-sulfur subunit, mitochondrial (280 aa).

The N-terminal 28 residues, Met-1–Gly-28, are a transit peptide targeting the mitochondrion. Positions Lys-40–Met-133 constitute a 2Fe-2S ferredoxin-type domain. 2 positions are modified to N6-acetyllysine: Lys-51 and Lys-55. Residues Cys-93, Cys-98, Cys-101, and Cys-113 each coordinate [2Fe-2S] cluster. Positions Phe-146–Trp-218 are interaction with SDHAF1. The region spanning Glu-176–Tyr-206 is the 4Fe-4S ferredoxin-type domain. The [4Fe-4S] cluster site is built by Cys-186, Cys-189, and Cys-192. Residue Cys-196 participates in [3Fe-4S] cluster binding. Trp-201 is a binding site for a ubiquinone. 2 residues coordinate [3Fe-4S] cluster: Cys-243 and Cys-249. Residue Cys-253 participates in [4Fe-4S] cluster binding.

Belongs to the succinate dehydrogenase/fumarate reductase iron-sulfur protein family. In terms of assembly, component of complex II composed of four subunits: the flavoprotein (FP) SDHA, iron-sulfur protein (IP) SDHB, and a cytochrome b560 composed of SDHC and SDHD. Interacts with SDHAF1; the interaction is required for iron-sulfur cluster incorporation into SDHB. As to quaternary structure, (Microbial infection) Interacts with JC virus small t antigen. Requires [2Fe-2S] cluster as cofactor. [3Fe-4S] cluster serves as cofactor. It depends on [4Fe-4S] cluster as a cofactor.

The protein resides in the mitochondrion inner membrane. It carries out the reaction a quinone + succinate = fumarate + a quinol. The enzyme catalyses (R)-malate + a quinone = enol-oxaloacetate + a quinol. The catalysed reaction is (S)-malate + a quinone = enol-oxaloacetate + a quinol. It participates in carbohydrate metabolism; tricarboxylic acid cycle; fumarate from succinate (eukaryal route): step 1/1. Its activity is regulated as follows. Enol-oxaloacetate inhibits the succinate dehydrogenase activity. In terms of biological role, iron-sulfur protein (IP) subunit of the succinate dehydrogenase complex (mitochondrial respiratory chain complex II), responsible for transferring electrons from succinate to ubiquinone (coenzyme Q). SDH also oxidizes malate to the non-canonical enol form of oxaloacetate, enol-oxaloacetate. Enol-oxaloacetate, which is a potent inhibitor of the succinate dehydrogenase activity, is further isomerized into keto-oxaloacetate. This Homo sapiens (Human) protein is Succinate dehydrogenase [ubiquinone] iron-sulfur subunit, mitochondrial (SDHB).